A 212-amino-acid polypeptide reads, in one-letter code: 3,4-dihydroxy-2-butanone 4-phosphate synthase (212 aa).

Residues 37-38 (RE), Asp-42, 150-154 (RRGHT), and Glu-174 each bind D-ribulose 5-phosphate. Glu-38 lines the Mg(2+) pocket. His-153 is a Mg(2+) binding site.

It belongs to the DHBP synthase family. In terms of assembly, homodimer. The cofactor is Mg(2+). Requires Mn(2+) as cofactor.

The enzyme catalyses D-ribulose 5-phosphate = (2S)-2-hydroxy-3-oxobutyl phosphate + formate + H(+). It functions in the pathway cofactor biosynthesis; riboflavin biosynthesis; 2-hydroxy-3-oxobutyl phosphate from D-ribulose 5-phosphate: step 1/1. Catalyzes the conversion of D-ribulose 5-phosphate to formate and 3,4-dihydroxy-2-butanone 4-phosphate. The sequence is that of 3,4-dihydroxy-2-butanone 4-phosphate synthase from Shewanella halifaxensis (strain HAW-EB4).